Reading from the N-terminus, the 264-residue chain is Leukocyte receptor cluster member 1 (264 aa).

2 disordered regions span residues 1-37 and 49-76; these read MNIL…RERR and FLRK…SGPV. A compositionally biased stretch (basic and acidic residues) spans 12 to 37; that stretch reads RNKDNVARVRRDEAQAREEEKERERR. Residues 16–46 are a coiled coil; that stretch reads NVARVRRDEAQAREEEKERERRVLLAQQEAR. Phosphoserine is present on S59. Residues 59-75 show a composition bias toward low complexity; it reads SLPELEAAEAGAPGSGP. Positions 89-115 form a coiled coil; the sequence is VIRGNKEYKEEKRQEKERQEKALGILT. The interval 118–264 is disordered; that stretch reads GQSAAEAQTQ…PRQQDPHLTH (147 aa). 2 stretches are compositionally biased toward basic and acidic residues: residues 146-162 and 170-214; these read PDEK…EMQK and HGGD…RSRA. Positions 196–222 form a coiled coil; the sequence is LDQLRAERLRREAAERSRAEALLARVQ. S245 is modified (phosphoserine).

This chain is Leukocyte receptor cluster member 1 (LENG1), found in Homo sapiens (Human).